We begin with the raw amino-acid sequence, 360 residues long: Phosphoserine aminotransferase (360 aa).

Residue Arg42 participates in L-glutamate binding. Residues 76–77 (AS), Trp102, Thr152, Asp172, and Gln195 contribute to the pyridoxal 5'-phosphate site. Lys196 is subject to N6-(pyridoxal phosphate)lysine. 237 to 238 (NT) is a binding site for pyridoxal 5'-phosphate.

It belongs to the class-V pyridoxal-phosphate-dependent aminotransferase family. SerC subfamily. Homodimer. Requires pyridoxal 5'-phosphate as cofactor.

Its subcellular location is the cytoplasm. The catalysed reaction is O-phospho-L-serine + 2-oxoglutarate = 3-phosphooxypyruvate + L-glutamate. It carries out the reaction 4-(phosphooxy)-L-threonine + 2-oxoglutarate = (R)-3-hydroxy-2-oxo-4-phosphooxybutanoate + L-glutamate. It functions in the pathway amino-acid biosynthesis; L-serine biosynthesis; L-serine from 3-phospho-D-glycerate: step 2/3. Its function is as follows. Catalyzes the reversible conversion of 3-phosphohydroxypyruvate to phosphoserine and of 3-hydroxy-2-oxo-4-phosphonooxybutanoate to phosphohydroxythreonine. This Bacillus cereus (strain ATCC 10987 / NRS 248) protein is Phosphoserine aminotransferase.